The primary structure comprises 144 residues: Snaclec trimecetin subunit beta (144 aa).

Positions methionine 1 to alanine 23 are cleaved as a signal peptide. 3 cysteine pairs are disulfide-bonded: cysteine 25/cysteine 36, cysteine 53/cysteine 142, and cysteine 119/cysteine 134. The C-type lectin domain maps to phenylalanine 32–lysine 143.

The protein belongs to the snaclec family. As to quaternary structure, heterodimer of subunits alpha and beta; disulfide-linked. Expressed by the venom gland.

The protein resides in the secreted. Its function is as follows. Snaclec that induces platelet aggregation in either human platelet rich plasma (PRP) or washed platelet suspensions. It causes aggregation in a dose-dependent manner even in the absence of various platelet agonists such as ADP or von Willebrand factor (vWF). Interestingly, it does not induce aggregation in rabbit PRP. A monoclonal antibody against the platelet GPIb receptor blocks the aggregation induced by trimecetin, suggesting that it acts by binding to GPIb (GP1BA/GP1BB). This Protobothrops mucrosquamatus (Taiwan habu) protein is Snaclec trimecetin subunit beta.